A 160-amino-acid polypeptide reads, in one-letter code: MGVFNYETETTSVIPAARLFKAFILDGDNLFPKVAPQAISSVENIEGNGGPGTIKKISFPEGFPFKYVKDRVDEVDHTNFKYNYSVIEGGPIGDTLEKISNEIKIVATPDGGSILKISNKYHTKGDHEVKAEQVKASKEMGETLLRAVESYLLAHSDAYN.

Brassinolide-binding residues include Lys55, Tyr82, Tyr84, and Asn101.

The protein belongs to the BetVI family.

It localises to the cytoplasm. Its function is as follows. May be a general steroid carrier protein. This chain is Major pollen allergen Bet v 1-A (BETVIA), found in Betula pendula (European white birch).